The sequence spans 360 residues: Biotin synthase 2 (360 aa).

Residues 53-280 form the Radical SAM core domain; it reads RRVKLNFLVN…TAEVRLSGGR (228 aa). Cys68, Cys72, and Cys75 together coordinate [4Fe-4S] cluster. The [2Fe-2S] cluster site is built by Cys112, Cys145, Cys205, and Arg275.

This sequence belongs to the radical SAM superfamily. Biotin synthase family. In terms of assembly, homodimer. [4Fe-4S] cluster serves as cofactor. The cofactor is [2Fe-2S] cluster.

The catalysed reaction is (4R,5S)-dethiobiotin + (sulfur carrier)-SH + 2 reduced [2Fe-2S]-[ferredoxin] + 2 S-adenosyl-L-methionine = (sulfur carrier)-H + biotin + 2 5'-deoxyadenosine + 2 L-methionine + 2 oxidized [2Fe-2S]-[ferredoxin]. It participates in cofactor biosynthesis; biotin biosynthesis; biotin from 7,8-diaminononanoate: step 2/2. Functionally, catalyzes the conversion of dethiobiotin (DTB) to biotin by the insertion of a sulfur atom into dethiobiotin via a radical-based mechanism. This is Biotin synthase 2 from Frankia casuarinae (strain DSM 45818 / CECT 9043 / HFP020203 / CcI3).